A 92-amino-acid chain; its full sequence is Small ribosomal subunit protein uS19 (92 aa).

It belongs to the universal ribosomal protein uS19 family.

Its function is as follows. Protein S19 forms a complex with S13 that binds strongly to the 16S ribosomal RNA. The protein is Small ribosomal subunit protein uS19 of Corynebacterium kroppenstedtii (strain DSM 44385 / JCM 11950 / CIP 105744 / CCUG 35717).